The chain runs to 486 residues: UDP-N-acetylmuramate--L-alanine ligase (486 aa).

An ATP-binding site is contributed by 126-132 (GTHGKTT).

The protein belongs to the MurCDEF family.

It is found in the cytoplasm. It carries out the reaction UDP-N-acetyl-alpha-D-muramate + L-alanine + ATP = UDP-N-acetyl-alpha-D-muramoyl-L-alanine + ADP + phosphate + H(+). It functions in the pathway cell wall biogenesis; peptidoglycan biosynthesis. In terms of biological role, cell wall formation. In Pectobacterium atrosepticum (strain SCRI 1043 / ATCC BAA-672) (Erwinia carotovora subsp. atroseptica), this protein is UDP-N-acetylmuramate--L-alanine ligase.